A 113-amino-acid chain; its full sequence is Hydrogenase maturation factor HypA (113 aa).

His2 is a binding site for Ni(2+). Zn(2+) contacts are provided by Cys73, Cys76, Cys89, and Cys92.

This sequence belongs to the HypA/HybF family.

Its function is as follows. Involved in the maturation of [NiFe] hydrogenases. Required for nickel insertion into the metal center of the hydrogenase. This chain is Hydrogenase maturation factor HypA, found in Methylocella silvestris (strain DSM 15510 / CIP 108128 / LMG 27833 / NCIMB 13906 / BL2).